Consider the following 429-residue polypeptide: Adenylosuccinate synthetase (429 aa).

GTP is bound by residues 12-18 (GDEGKGK) and 40-42 (GHT). Residue Asp13 is the Proton acceptor of the active site. Mg(2+) is bound by residues Asp13 and Gly40. IMP is bound by residues 13-16 (DEGK), 38-41 (NAGH), Thr128, Arg142, Gln224, Thr239, and Arg303. The active-site Proton donor is His41. 299-305 (VTTGRPR) serves as a coordination point for substrate. GTP is bound by residues Arg305, 331-333 (LLD), and 413-415 (SVG).

The protein belongs to the adenylosuccinate synthetase family. Homodimer. Mg(2+) serves as cofactor.

The protein resides in the cytoplasm. The enzyme catalyses IMP + L-aspartate + GTP = N(6)-(1,2-dicarboxyethyl)-AMP + GDP + phosphate + 2 H(+). The protein operates within purine metabolism; AMP biosynthesis via de novo pathway; AMP from IMP: step 1/2. In terms of biological role, plays an important role in the de novo pathway of purine nucleotide biosynthesis. Catalyzes the first committed step in the biosynthesis of AMP from IMP. This chain is Adenylosuccinate synthetase, found in Clostridioides difficile (strain 630) (Peptoclostridium difficile).